Reading from the N-terminus, the 754-residue chain is Polyadenylate-binding protein, cytoplasmic and nuclear (754 aa).

Positions 1–25 (MSAEVSTTPAADNVNGTPEATNAAA) are enriched in polar residues. The disordered stretch occupies residues 1–52 (MSAEVSTTPAADNVNGTPEATNAAATSAPEVTAVESSSPTSPNNNNQPHSAS). Positions 36 to 46 (SSSPTSPNNNN) are enriched in low complexity. 4 RRM domains span residues 51-129 (ASLY…WSQR), 139-216 (GNVF…HHIS), 232-309 (TNIY…RAQK), and 335-465 (VNLY…LAQR). Disordered regions lie at residues 365 to 420 (KVMR…KKSD) and 595 to 648 (RGGG…EEAP). Basic and acidic residues predominate over residues 366–420 (VMRDSTPAERTETPDSEKEKEVNKENEKKEDEEKAAEEKPKESDEEKKDETKKSD). Residues 610–633 (GMRGPGYQGRGGPQGGPRPQGGRG) show a composition bias toward gly residues. The segment covering 634–648 (QNAAAQPAAGREEAP) has biased composition (low complexity). The 78-residue stretch at 649–726 (AGALTAQALN…ALSVYDEYMK (78 aa)) folds into the PABC domain. The interval 729–754 (GEGEAPADADKPKEAAKETATEENKS) is disordered.

This sequence belongs to the polyadenylate-binding protein type-1 family.

Its subcellular location is the cytoplasm. The protein resides in the nucleus. Functionally, binds the poly(A) tail of mRNA. Appears to be an important mediator of the multiple roles of the poly(A) tail in mRNA biogenesis, stability and translation. In the nucleus, involved in both mRNA cleavage and polyadenylation. Is also required for efficient mRNA export to the cytoplasm. Acts in concert with a poly(A)-specific nuclease (PAN) to affect poly(A) tail shortening, which may occur concomitantly with either nucleocytoplasmic mRNA transport or translational initiation. In the cytoplasm, stimulates translation initiation and regulates mRNA decay through translation termination-coupled poly(A) shortening, probably mediated by PAN. This is Polyadenylate-binding protein, cytoplasmic and nuclear (pab1) from Aspergillus clavatus (strain ATCC 1007 / CBS 513.65 / DSM 816 / NCTC 3887 / NRRL 1 / QM 1276 / 107).